The following is a 394-amino-acid chain: Gap junction gamma-1 protein (394 aa).

At 1-22 the chain is on the cytoplasmic side; it reads MSWSFLTRLLEEIHNHSTFVGK. Residues 23 to 45 form a helical membrane-spanning segment; sequence IWLSVLIVFRIVLTAVGGESIYY. At 46 to 75 the chain is on the extracellular side; that stretch reads DEQSKFVCNTEQPGCENVCYDAFAPLSHVR. A helical membrane pass occupies residues 76-95; that stretch reads FWVFQIILVATPSVMYLGYA. The Cytoplasmic portion of the chain corresponds to 96–176; the sequence is IHKIARMVEH…RRIREDGLMR (81 aa). The helical transmembrane segment at 177–199 threads the bilayer; sequence IYVLQLLVRATFEVGFLIGQYLL. Over 200-229 the chain is Extracellular; sequence YGFEVSPVFVCSRKPCPHKIDCFISRPTEK. The chain crosses the membrane as a helical span at residues 230 to 252; it reads TIFLLIMYGVSCMCLLLNVWEML. Residues 253–394 are Cytoplasmic-facing; the sequence is HLGFGTIRDT…SGDGKNSVWI (142 aa). The tract at residues 354–394 is disordered; it reads IQAYNNQNNPGSSSREKKSKAGSNKSSASSKSGDGKNSVWI. The span at 356 to 366 shows a compositional bias: polar residues; the sequence is AYNNQNNPGSS. Positions 374–394 are enriched in low complexity; that stretch reads AGSNKSSASSKSGDGKNSVWI.

Belongs to the connexin family. Gamma-type subfamily. A connexon is composed of a hexamer of connexins. Mostly in heart and stomach.

The protein resides in the cell membrane. The protein localises to the cell junction. It is found in the gap junction. Functionally, one gap junction consists of a cluster of closely packed pairs of transmembrane channels, the connexons, through which materials of low MW diffuse from one cell to a neighboring cell. This is Gap junction gamma-1 protein (GJC1) from Gallus gallus (Chicken).